The sequence spans 408 residues: Argininosuccinate synthase (408 aa).

ATP contacts are provided by residues 10 to 18 (AYSGGLDTS) and A37. Positions 90 and 95 each coordinate L-citrulline. Residue G120 participates in ATP binding. L-aspartate contacts are provided by T122, N126, and D127. An L-citrulline-binding site is contributed by N126. L-citrulline is bound by residues R130, S181, S190, E266, and Y278.

Belongs to the argininosuccinate synthase family. Type 1 subfamily. In terms of assembly, homotetramer.

It localises to the cytoplasm. The enzyme catalyses L-citrulline + L-aspartate + ATP = 2-(N(omega)-L-arginino)succinate + AMP + diphosphate + H(+). The protein operates within amino-acid biosynthesis; L-arginine biosynthesis; L-arginine from L-ornithine and carbamoyl phosphate: step 2/3. The protein is Argininosuccinate synthase of Laribacter hongkongensis (strain HLHK9).